We begin with the raw amino-acid sequence, 130 residues long: Small ribosomal subunit protein uS9 (130 aa).

This sequence belongs to the universal ribosomal protein uS9 family.

This chain is Small ribosomal subunit protein uS9, found in Marinobacter nauticus (strain ATCC 700491 / DSM 11845 / VT8) (Marinobacter aquaeolei).